Here is a 382-residue protein sequence, read N- to C-terminus: Elongation factor Tu (382 aa).

GTP contacts are provided by residues H1 to T7, D62 to H66, and N117 to D120. The tr-type G domain maps to H1–Q190. T7 provides a ligand contact to Mg(2+).

It belongs to the TRAFAC class translation factor GTPase superfamily. Classic translation factor GTPase family. EF-Tu/EF-1A subfamily. Monomer.

It is found in the cytoplasm. The catalysed reaction is GTP + H2O = GDP + phosphate + H(+). In terms of biological role, GTP hydrolase that promotes the GTP-dependent binding of aminoacyl-tRNA to the A-site of ribosomes during protein biosynthesis. This is Elongation factor Tu from Chloroflexus aurantiacus.